The primary structure comprises 127 residues: Sulfiredoxin (127 aa).

Belongs to the sulfiredoxin family. Mg(2+) is required as a cofactor. Forms a transient disulfide bond with TSA1 during the reduction of cysteine sulfinic acid (-SO2H).

The protein resides in the cytoplasm. It is found in the nucleus. The catalysed reaction is S-hydroxy-S-oxy-L-cysteinyl-[peroxiredoxin] + [protein]-dithiol + ATP = S-hydroxy-L-cysteinyl-[peroxiredoxin] + [protein]-disulfide + ADP + phosphate. In terms of biological role, contributes to oxidative stress resistance by reducing cysteine-sulfinic acid formed under exposure to oxidants in the peroxiredoxin TSA1. May catalyze the reduction in a multi-step process by acting both as a specific phosphotransferase and as thioltransferase. This chain is Sulfiredoxin, found in Saccharomyces cerevisiae (strain ATCC 204508 / S288c) (Baker's yeast).